The sequence spans 220 residues: Histone deacetylase complex subunit SAP30 (220 aa).

The interaction with NCOR1 stretch occupies residues 1 to 129; sequence MNGFTPDEMS…QSVRNRRKRK (129 aa). The residue at position 5 (Thr-5) is a Phosphothreonine. An Atypical zinc finger spans residues 67-115; the sequence is CCLREDGERCGRAAGNASFSKRIQKSISQKKVKIELDKSARHLYICDYH. Residue Lys-87 forms a Glycyl lysine isopeptide (Lys-Gly) (interchain with G-Cter in SUMO2) linkage. The segment at 123–143 is disordered; it reads RNRRKRKGSDDDGGDSPVQDI. The tract at residues 130–220 is interaction with SIN3A; it reads GSDDDGGDSP…SDLKVDSGVH (91 aa). Phosphoserine occurs at positions 131 and 138. Thr-145 bears the Phosphothreonine mark. Glycyl lysine isopeptide (Lys-Gly) (interchain with G-Cter in SUMO2) cross-links involve residues Lys-194, Lys-205, and Lys-214.

The protein belongs to the SAP30 family. Component of the histone deacetylase complex that includes at least SIN3A, HDAC1 and HDAC2. Found in a complex composed of at least SINHCAF, SIN3A, HDAC1, SAP30, RBBP4, OGT and TET1. Interacts with HDAC1. Interacts with SIN3A, SIN3B, HDAC2, RBBP4 and NCOR1. Interacts with SAMSN1. Interacts with HCFC1. Interacts with SAP30BP. In terms of tissue distribution, expressed in all tissues tested with highest levels in pancreas, ovary, PBL, spleen and thymus; lowest levels in brain, placenta, lung and kidney.

The protein resides in the nucleus. In terms of biological role, involved in the functional recruitment of the Sin3-histone deacetylase complex (HDAC) to a specific subset of N-CoR corepressor complexes. Capable of transcription repression by N-CoR. Active in deacetylating core histone octamers (when in a complex) but inactive in deacetylating nucleosomal histones. (Microbial infection) Involved in transcriptional repression of HHV-1 genes TK and gC. This chain is Histone deacetylase complex subunit SAP30, found in Homo sapiens (Human).